A 348-amino-acid chain; its full sequence is Large ribosomal subunit protein uL10 (348 aa).

Residues 291 to 348 are disordered; it reads LPEELRGVSAADTGAAEEEESTDEEAADADQADAAEDDDAADDDGDDEDAGDALGSLF. The span at 305-341 shows a compositional bias: acidic residues; that stretch reads AAEEEESTDEEAADADQADAAEDDDAADDDGDDEDAG.

This sequence belongs to the universal ribosomal protein uL10 family. Part of the 50S ribosomal subunit. Forms part of the ribosomal stalk which helps the ribosome interact with GTP-bound translation factors. Forms a heptameric L10(L12)2(L12)2(L12)2 complex, where L10 forms an elongated spine to which the L12 dimers bind in a sequential fashion.

Forms part of the ribosomal stalk, playing a central role in the interaction of the ribosome with GTP-bound translation factors. The chain is Large ribosomal subunit protein uL10 from Haloferax volcanii (strain ATCC 29605 / DSM 3757 / JCM 8879 / NBRC 14742 / NCIMB 2012 / VKM B-1768 / DS2) (Halobacterium volcanii).